A 169-amino-acid polypeptide reads, in one-letter code: MGASPIFYLHSMHEGVQVSSKLEQLQALLAPVVEGLGYQCWGIEYVSQGKHSVLRIYIDKEGGILVEDCEAVSRQASAILDVEDPISSEYTLEVSSPGMDRPLFTLEQFASHAGEQVKIKLRTPFEGRRNFQGLLRGVEEQDVVVQVDSHEFLLPIDSIDKANIIPSFD.

Belongs to the RimP family.

It is found in the cytoplasm. Required for maturation of 30S ribosomal subunits. The protein is Ribosome maturation factor RimP of Pseudomonas putida (strain W619).